The primary structure comprises 446 residues: C-type lectin domain family 18 member C (446 aa).

A signal peptide spans 1–26; sequence MLHPETSPGRGHLLAVLLALLGTAWA. The region spanning 52-182 is the SCP domain; the sequence is LSLHNRLRSW…AAIEAFVCAY (131 aa). Asn144 is a glycosylation site (N-linked (GlcNAc...) asparagine). An EGF-like domain is found at 228 to 261; sequence PRNPCRMSCQNHGRLNISTCHCHCPPGYTGRYCQ. Cystine bridges form between Cys236–Cys249, Cys251–Cys260, Cys327–Cys432, and Cys408–Cys424. A C-type lectin domain is found at 306–433; sequence IDGDCFMVSS…CKTRNRYICQ (128 aa).

Detected in peripheral blood cells.

It localises to the secreted. Its subcellular location is the endoplasmic reticulum. The protein resides in the golgi apparatus. The protein localises to the endosome. Binds polysaccharidesin a Ca(2+)-independent manner with a preferentially binding to fucoidan, beta-glucans and galactans. This is C-type lectin domain family 18 member C (CLEC18C) from Homo sapiens (Human).